Consider the following 449-residue polypeptide: Dynein regulatory complex protein 10 (449 aa).

Residues 90–125 (AVREHEDLCQVLLENVRCLKEKERQLQEQKEAEEEG) adopt a coiled-coil conformation. The 30-residue stretch at 400-429 (MVRAATLIQALWKGYLVRSLLRSKKKRGKG) folds into the IQ domain. Residues 422–449 (SKKKRGKGKAKDKEKGKQKGKEKGKGKK) are disordered. Residues 430 to 449 (KAKDKEKGKQKGKEKGKGKK) are compositionally biased toward basic and acidic residues.

The protein belongs to the DRC10 family. In terms of assembly, component of the nexin-dynein regulatory complex (N-DRC). Interacts with CFAP52.

It is found in the cytoplasm. It localises to the cytoskeleton. The protein localises to the flagellum axoneme. Functionally, component of the nexin-dynein regulatory complex (N-DRC), a key regulator of ciliary/flagellar motility which maintains the alignment and integrity of the distal axoneme and regulates microtubule sliding in motile axonemes. In Homo sapiens (Human), this protein is Dynein regulatory complex protein 10 (IQCD).